The sequence spans 90 residues: Cell division topological specificity factor (90 aa).

It belongs to the MinE family.

Its function is as follows. Prevents the cell division inhibition by proteins MinC and MinD at internal division sites while permitting inhibition at polar sites. This ensures cell division at the proper site by restricting the formation of a division septum at the midpoint of the long axis of the cell. This is Cell division topological specificity factor from Brucella abortus (strain S19).